We begin with the raw amino-acid sequence, 382 residues long: Alcohol dehydrogenase 4 (382 aa).

Residues Asp40, Asn72, Gly99, Ser100, Thr139, Thr140, Thr148, Phe150, Lys161, and Gly183 each coordinate NAD(+). Residues Asp195, His199, and His264 each coordinate Fe(2+). NAD(+) is bound by residues His268 and His278. His278 lines the Fe(2+) pocket.

The protein belongs to the iron-containing alcohol dehydrogenase family. As to quaternary structure, homodimer. Zn(2+) is required as a cofactor. It depends on Fe(2+) as a cofactor.

The protein resides in the mitochondrion. It carries out the reaction a primary alcohol + NAD(+) = an aldehyde + NADH + H(+). It catalyses the reaction ethanol + NAD(+) = acetaldehyde + NADH + H(+). With respect to regulation, inhibited by EDTA. In terms of biological role, alcohol dehydrogenase specific for ethanol. Acts mainyl as a mitochondrial formaldehyde dehydrogenase and has no effect on ethanol production. Shows drastically reduced activity towards primary alcohols from 4 carbon atoms upward. Isomers of aliphatic alcohol, as well as secondary alcohols and glycerol are not used at all. The role of ADH4 in yeast metabolism is not yet known, but ADH4 is not responsible for the production of ethanol during growth on glucose nor responsible for the oxidation of ethanol to acetaldehyde. The sequence is that of Alcohol dehydrogenase 4 from Saccharomyces cerevisiae (strain ATCC 204508 / S288c) (Baker's yeast).